The following is a 431-amino-acid chain: Divergent protein kinase domain 1B (431 aa).

At 1-30 (MRKLRRLVHMVLFCPISKGLQSRLPGIKVK) the chain is on the cytoplasmic side. The short motif at 5 to 6 (RR) is the May mediate ER retention element. A helical transmembrane segment spans residues 31–51 (YLFLAWLSVFVGSWVVYMHYS). The Lumenal segment spans residues 52–431 (SYSELCRGHV…WKKISNTKYS (380 aa)). Intrachain disulfides connect C57/C94 and C62/C117.

The protein belongs to the DIPK family. Among the many cysteines in the lumenal domain, most are probably involved in disulfide bonds.

The protein localises to the endoplasmic reticulum membrane. This is Divergent protein kinase domain 1B (dipk1b) from Xenopus tropicalis (Western clawed frog).